The chain runs to 206 residues: Large ribosomal subunit protein uL4 (206 aa).

It belongs to the universal ribosomal protein uL4 family. Part of the 50S ribosomal subunit.

One of the primary rRNA binding proteins, this protein initially binds near the 5'-end of the 23S rRNA. It is important during the early stages of 50S assembly. It makes multiple contacts with different domains of the 23S rRNA in the assembled 50S subunit and ribosome. Its function is as follows. Forms part of the polypeptide exit tunnel. The protein is Large ribosomal subunit protein uL4 of Nitrobacter winogradskyi (strain ATCC 25391 / DSM 10237 / CIP 104748 / NCIMB 11846 / Nb-255).